We begin with the raw amino-acid sequence, 131 residues long: Replicase polyprotein 1ab (131 aa).

A Nidovirus-type SAM-dependent 2'-O-MTase domain is found at 1–128 (ITEFSWNKYL…KLLNFGNHFI (128 aa)).

Its function is as follows. The replicase polyprotein of coronaviruses is a multifunctional protein: it contains the activities necessary for the transcription of negative stranded RNA, leader RNA, subgenomic mRNAs and progeny virion RNA as well as proteinases responsible for the cleavage of the polyprotein into functional products. The protein is Replicase polyprotein 1ab (rep) of Sus scrofa (Pig).